Consider the following 234-residue polypeptide: Small ribosomal subunit protein uS3 (234 aa).

Residues 39–109 (IRTLINKHYG…EVRIAIYEVK (71 aa)) enclose the KH type-2 domain.

The protein belongs to the universal ribosomal protein uS3 family. In terms of assembly, part of the 30S ribosomal subunit. Forms a tight complex with proteins S10 and S14.

Its function is as follows. Binds the lower part of the 30S subunit head. Binds mRNA in the 70S ribosome, positioning it for translation. This is Small ribosomal subunit protein uS3 from Coprothermobacter proteolyticus (strain ATCC 35245 / DSM 5265 / OCM 4 / BT).